The chain runs to 457 residues: tRNA modification GTPase MnmE (457 aa).

The (6S)-5-formyl-5,6,7,8-tetrahydrofolate site is built by arginine 22, glutamate 85, and arginine 124. The 160-residue stretch at 219 to 378 (GATVVIAGKP…LKEKIYDLVL (160 aa)) folds into the TrmE-type G domain. Asparagine 229 contacts K(+). Residues 229–234 (NTGKSS), 248–254 (TPVPGTT), 273–276 (DTAG), and 333–336 (NKAD) each bind GTP. A Mg(2+)-binding site is contributed by serine 233. K(+)-binding residues include threonine 248, valine 250, and threonine 253. Threonine 254 lines the Mg(2+) pocket. (6S)-5-formyl-5,6,7,8-tetrahydrofolate is bound at residue lysine 457.

It belongs to the TRAFAC class TrmE-Era-EngA-EngB-Septin-like GTPase superfamily. TrmE GTPase family. As to quaternary structure, homodimer. Heterotetramer of two MnmE and two MnmG subunits. K(+) is required as a cofactor.

It is found in the cytoplasm. Its function is as follows. Exhibits a very high intrinsic GTPase hydrolysis rate. Involved in the addition of a carboxymethylaminomethyl (cmnm) group at the wobble position (U34) of certain tRNAs, forming tRNA-cmnm(5)s(2)U34. This chain is tRNA modification GTPase MnmE, found in Syntrophus aciditrophicus (strain SB).